The sequence spans 166 residues: ATP synthase subunit b (166 aa).

A helical transmembrane segment spans residues 15–37 (TLYYLLIFAALLLLVKHFAWGPV).

Belongs to the ATPase B chain family. F-type ATPases have 2 components, F(1) - the catalytic core - and F(0) - the membrane proton channel. F(1) has five subunits: alpha(3), beta(3), gamma(1), delta(1), epsilon(1). F(0) has three main subunits: a(1), b(2) and c(10-14). The alpha and beta chains form an alternating ring which encloses part of the gamma chain. F(1) is attached to F(0) by a central stalk formed by the gamma and epsilon chains, while a peripheral stalk is formed by the delta and b chains.

Its subcellular location is the cell membrane. Its function is as follows. F(1)F(0) ATP synthase produces ATP from ADP in the presence of a proton or sodium gradient. F-type ATPases consist of two structural domains, F(1) containing the extramembraneous catalytic core and F(0) containing the membrane proton channel, linked together by a central stalk and a peripheral stalk. During catalysis, ATP synthesis in the catalytic domain of F(1) is coupled via a rotary mechanism of the central stalk subunits to proton translocation. In terms of biological role, component of the F(0) channel, it forms part of the peripheral stalk, linking F(1) to F(0). The chain is ATP synthase subunit b from Lactobacillus gasseri (strain ATCC 33323 / DSM 20243 / BCRC 14619 / CIP 102991 / JCM 1131 / KCTC 3163 / NCIMB 11718 / NCTC 13722 / AM63).